The following is a 400-amino-acid chain: Enoyl-[acyl-carrier-protein] reductase [NADH] (400 aa).

NAD(+) contacts are provided by residues 48-53 (GASTGY), 74-75 (FE), 111-112 (DA), and 139-140 (LA). Tyr225 contributes to the substrate binding site. Tyr235 serves as the catalytic Proton donor. NAD(+)-binding positions include Lys244 and 273–275 (VVT).

Belongs to the TER reductase family. In terms of assembly, monomer.

It catalyses the reaction a 2,3-saturated acyl-[ACP] + NAD(+) = a (2E)-enoyl-[ACP] + NADH + H(+). It participates in lipid metabolism; fatty acid biosynthesis. Its function is as follows. Involved in the final reduction of the elongation cycle of fatty acid synthesis (FAS II). Catalyzes the reduction of a carbon-carbon double bond in an enoyl moiety that is covalently linked to an acyl carrier protein (ACP). The sequence is that of Enoyl-[acyl-carrier-protein] reductase [NADH] from Burkholderia cenocepacia (strain ATCC BAA-245 / DSM 16553 / LMG 16656 / NCTC 13227 / J2315 / CF5610) (Burkholderia cepacia (strain J2315)).